The following is a 399-amino-acid chain: MAKNRHLFTSESVSDGHPDKIADQISDAILDAIISKDPDARVACETTVTTGLVLVAGEITTSVYVDIPKIVRDTIKEIGYTRAKYGFDAETCAVLTAIDEQSPDIAQGVDEALESRSGSEIDAAIEAIGAGDQGLMFGFATDETEELMPLPIFLAHGLARKLTELRKTNKLDYLRPDAKTQVTVEYDEFNQPVRIDTIVVSTQHHPDITQEQIAKDLHTHLFPEVIDASFLDENTKYFINPTGRFVIGGPLGDAGLTGRKIIVDTYGGYARHGGGAFSGKDPTKVDRSGAYAARYVAKNIVAAGLAKKVEVQVAYAIGVARPVSISIDTYGTSDYSEQELIDGVNELFDLRPAGIIHMLDLRRPIYRQTAAFGHFGRSDLDLPWERTDKAEALKKLIVK.

H17 provides a ligand contact to ATP. Position 19 (D19) interacts with Mg(2+). E45 is a K(+) binding site. L-methionine-binding residues include E58 and Q101. Residues Q101–E111 are flexible loop. ATP is bound by residues D177 to K179, R244 to F245, D253, R259 to K260, A276, and K280. D253 is an L-methionine binding site. K284 provides a ligand contact to L-methionine.

It belongs to the AdoMet synthase family. In terms of assembly, homotetramer; dimer of dimers. The cofactor is Mg(2+). K(+) is required as a cofactor.

The protein localises to the cytoplasm. The enzyme catalyses L-methionine + ATP + H2O = S-adenosyl-L-methionine + phosphate + diphosphate. Its pathway is amino-acid biosynthesis; S-adenosyl-L-methionine biosynthesis; S-adenosyl-L-methionine from L-methionine: step 1/1. Catalyzes the formation of S-adenosylmethionine (AdoMet) from methionine and ATP. The overall synthetic reaction is composed of two sequential steps, AdoMet formation and the subsequent tripolyphosphate hydrolysis which occurs prior to release of AdoMet from the enzyme. The sequence is that of S-adenosylmethionine synthase from Listeria innocua serovar 6a (strain ATCC BAA-680 / CLIP 11262).